An 88-amino-acid polypeptide reads, in one-letter code: Small ribosomal subunit protein bS20 (88 aa).

It belongs to the bacterial ribosomal protein bS20 family.

Its function is as follows. Binds directly to 16S ribosomal RNA. The polypeptide is Small ribosomal subunit protein bS20 (Rhodospirillum rubrum (strain ATCC 11170 / ATH 1.1.1 / DSM 467 / LMG 4362 / NCIMB 8255 / S1)).